Consider the following 547-residue polypeptide: Glucose-6-phosphate isomerase (547 aa).

The active-site Proton donor is glutamate 355. Residues histidine 386 and lysine 512 contribute to the active site.

Belongs to the GPI family.

The protein localises to the cytoplasm. The catalysed reaction is alpha-D-glucose 6-phosphate = beta-D-fructose 6-phosphate. It participates in carbohydrate biosynthesis; gluconeogenesis. It functions in the pathway carbohydrate degradation; glycolysis; D-glyceraldehyde 3-phosphate and glycerone phosphate from D-glucose: step 2/4. Functionally, catalyzes the reversible isomerization of glucose-6-phosphate to fructose-6-phosphate. The sequence is that of Glucose-6-phosphate isomerase from Corynebacterium diphtheriae (strain ATCC 700971 / NCTC 13129 / Biotype gravis).